The primary structure comprises 230 residues: RING finger protein 141 (230 aa).

Residues 154 to 191 (ECCICMDGRVDLILPCAHSFCQKCIDKWSDRHRSCPVC) form an RING-type zinc finger.

The protein is RING finger protein 141 (RNF141) of Gallus gallus (Chicken).